We begin with the raw amino-acid sequence, 1459 residues long: MDFEQYGQSSQQPRQRRRRAGKRRLNNKTPIAARLALDPQLRGKVGILSEDLANDLFQQQALQDVTTSDDGVLYVAIAPHTPTYTSVEDQAWTILPVRIQPTERSPVAMSHSTVLFPESADSLQPFLQALGKVDSSRNSLQAHRSVEIRILDVAPIHLDTIFVTVERHLLRNHDDVQTKFGGGFTNAQGPNGLWGKTGKSVEAKKYSKRAAADAEQRLTAAVREALGAQRIVHTGDVLPLPLPSHPITYAPPPPARISFCEPVSQGLLMSTTKIVLVQARPQGIRAQQTMPSRSALLKQVAEDEADDTSNEQFYSAAEDKPGESGTEMEVTSAAEESETEGSAGSMSDSSDDSLEDMISLSAPELPQPPSGVMSSLTSATPRAGGRRSDGIHTPGSVASNFTSATMRPGRGGGKTFKVEGLLQQVPNEVLHPRPRDDEDVDSFVFVDISTLAKIGCFSGDWVRIEAAEEPQLNMFASLKFGSFNDSPEDSGDWRPVKIFGLSGLPSSKPRYAINHSGERRPSISQRPPTRLTPSVFVPPLLLGNIENPKYLRISPMTFATPNGSSKPGILQHMKNTAAKNPPLAKEVTLLKVSTPLSMDRVLQPALFAGLKQYFESRRRILKSGDLVGISVDEGLGRAVFSGTGSGDSASQEEDITIRLGQGANATNAGTRKIGVAWFRVGQVAPTTVEELEETGEDQWGGVAVLDPATTRMVQAGSDVSRVPGVLGNGWEYWLGVKTIPKTVHDAPTPHGIVADPPQSVIPPLQQRIRDLMSAATSPRAIQLGMKPVFILLRSQQRHIGKATVATRACSDIGIHTFPIDAYDILTEGGANGGDVKTEAYLKARAERAFHCGANCTALLIRHIEVLTADRIVTAMSDILNDARVVIATTTDVETIPEGIRSLITHEFEMGAPEEKEREGILQNAVTERGIRLSADVDLGSIALKTAALVAGDLVDVVERAAGARTARLESLAEASKKISGSEVFVRDVLLAGGDGARGVTKADFDAAVEAARKNFADSIGAPKIPNVGWDDVGGLTNVKDALVETIQLPLERPELFAKGMKKRSGILFYGPPGTGKTLLAKAIATEFSLNFFSVKGPELLNMYIGESEANVRRVFQRARDARPCVVFFDELDSVAPKRGNQGDSGGVMDRIVSQLLAELDGMNGGEENSGGVFVIGATNRPDLLDTALLRPGRFDKMLYLGVSDTHRKQATILEALTRKFALHPDVSLDRVAEQLPLTYTGADLYALCSDAMLKAITRKATAVDEKINALPNGPVSTAWFFDHLATKEDVNVMVTEEDFLSAQGELVPSVSAKELEHFERIRQTFEAVDKSKQDPAAAAPQTIAEAMEAFSLGGSAIPEEAPTINGDSLTPGGIHGRIKGLNRWPGNPVRSTSGQSTTSSKGKGKSVSKKGKSRTGAESDGSVDGDDEDMADANSKEDEDEDDYVVRTDHLRNPMEEVE.

A compositionally biased stretch (low complexity) spans 1-13; it reads MDFEQYGQSSQQP. 2 disordered regions span residues 1 to 28 and 316 to 410; these read MDFE…LNNK and AAED…RPGR. Over residues 14 to 26 the composition is skewed to basic residues; that stretch reads RQRRRRAGKRRLN. The span at 327–348 shows a compositional bias: low complexity; the sequence is EMEVTSAAEESETEGSAGSMSD. Positions 396–405 are enriched in polar residues; sequence SVASNFTSAT. Residue 1070–1077 participates in ATP binding; that stretch reads GPPGTGKT. Positions 1357–1459 are disordered; sequence IPEEAPTING…HLRNPMEEVE (103 aa). The segment covering 1391–1401 has biased composition (low complexity); sequence STSGQSTTSSK. Positions 1402 to 1413 are enriched in basic residues; sequence GKGKSVSKKGKS. The segment covering 1421–1443 has biased composition (acidic residues); it reads GSVDGDDEDMADANSKEDEDEDD. Positions 1444–1459 are enriched in basic and acidic residues; that stretch reads YVVRTDHLRNPMEEVE.

It belongs to the AAA ATPase family. As to quaternary structure, interacts with PEX1; forming the PEX1-PEX6 AAA ATPase complex, which is composed of a heterohexamer formed by a trimer of PEX1-PEX6 dimers.

The protein localises to the cytoplasm. The protein resides in the cytosol. It localises to the peroxisome membrane. It catalyses the reaction ATP + H2O = ADP + phosphate + H(+). Component of the PEX1-PEX6 AAA ATPase complex, a protein dislocase complex that mediates the ATP-dependent extraction of the PEX5 receptor from peroxisomal membranes, an essential step for PEX5 recycling. Specifically recognizes PEX5 monoubiquitinated at 'Cys-6', and pulls it out of the peroxisome lumen through the PEX2-PEX10-PEX12 retrotranslocation channel. Extraction by the PEX1-PEX6 AAA ATPase complex is accompanied by unfolding of the TPR repeats and release of bound cargo from PEX5. The protein is Peroxisomal ATPase PEX6 (pex6) of Penicillium chrysogenum (Penicillium notatum).